Reading from the N-terminus, the 301-residue chain is MSGGLDILSLKEDDVTKMLGAQTHIGSENSDYQMEQYVYKRRNDGVHILNLRRTWEKLLLAARAIVAIEHPADVFVISSRPIGQRAVLKFASYTGATPIAGRFTPGAFTNQIQAAFREPRLLVVTDPHTDHQPITEAAYVNIPVIAFCNTESPLRFVDIAIPCNNKSPHSIGLMWWLLAREVLRFRGTIPREPKWDVVVDLFFYRDPEEAEKEEQAGKESAAAIADKPADEFAAHAPTESWNDTVVPSADLAPQSWAEESASIPQYAPAPQAAAAPVADDWTTPVGADDWGQDWSNSTSQW.

Residues 237–301 form a disordered region; that stretch reads PTESWNDTVV…QDWSNSTSQW (65 aa). The segment covering 264–278 has biased composition (low complexity); it reads PQYAPAPQAAAAPVA.

Belongs to the universal ribosomal protein uS2 family. As to quaternary structure, component of the small ribosomal subunit. Mature ribosomes consist of a small (40S) and a large (60S) subunit. The 40S subunit contains about 33 different proteins and 1 molecule of RNA (18S). The 60S subunit contains about 49 different proteins and 3 molecules of RNA (28S, 5.8S and 5S). Interacts with ribosomal protein S21.

Its subcellular location is the cytoplasm. Functionally, required for the assembly and/or stability of the 40S ribosomal subunit. Required for the processing of the 20S rRNA-precursor to mature 18S rRNA in a late step of the maturation of 40S ribosomal subunits. The protein is Small ribosomal subunit protein uS2 of Diaphorina citri (Asian citrus psyllid).